The sequence spans 684 residues: MDKKQAVAEIIRLREEIDRHNYRYYVLARPEISDFQYDAMLEKLVALEGEFPELKTSDSPSQRVGGGITKEFPTVEHREPMLSLSNTYSIEEVGEFYHRVVKLLPEEHRDSPEFVAELKFDGVAVSLLYRDGLLVRGATRGDGSQGDDITGNIRTIRSVPLRLGNPSGSGEGVERYEGREIEVRGEVFMTKTDFAVLNEGRPEEERFANPRNATAGTLKLQDSGEVSRRKMVFVAYYLKESSAEIISHAERLELLERLGFYTGGEHRVCRTLKDIREYIDGWQKKRLTGLPYEIDGIVLKLNNTALRDELGATSKSPRWAIAYKFPAERARTVIRSIVFQVGRLGTITPVAELEPVRLAGTTVSRSTLHNLEEVERLDVRLHDTVVIEKSGEIIPKVISVVEEKRRPGTLPVVVPESCPSCGTPLVKPPNEVHYYCPNSEGCPAQTKARIEHFASRNAMDINGLGKAIVEQLVSSGMVVDAGDLYRLTPDLIMRLDRQAEKSAGNLVNAIAKSRNREYFRVLFALGIRHVGIATARELAGAYPTLDMLCKASVEALSDVTDVGPVIAESVHAFFRKPSATAMIEKLREAGVRLEAEKTKKPVNLNFDGMKVIFTGALERYTRDEAAGLVRERGGKTVASVSKNTNLVVYGKEPGSKLEKARKLGVRVITESEFEEMLGEVGSNE.

NAD(+) contacts are provided by residues 34 to 38 (DFQYD), 83 to 84 (SL), and E117. The active-site N6-AMP-lysine intermediate is the K119. NAD(+) contacts are provided by R140, E186, K300, and K324. 4 residues coordinate Zn(2+): C418, C421, C436, and C442. The BRCT domain occupies 601–684 (PVNLNFDGMK…EMLGEVGSNE (84 aa)).

This sequence belongs to the NAD-dependent DNA ligase family. LigA subfamily. Mg(2+) is required as a cofactor. Mn(2+) serves as cofactor.

The catalysed reaction is NAD(+) + (deoxyribonucleotide)n-3'-hydroxyl + 5'-phospho-(deoxyribonucleotide)m = (deoxyribonucleotide)n+m + AMP + beta-nicotinamide D-nucleotide.. Functionally, DNA ligase that catalyzes the formation of phosphodiester linkages between 5'-phosphoryl and 3'-hydroxyl groups in double-stranded DNA using NAD as a coenzyme and as the energy source for the reaction. It is essential for DNA replication and repair of damaged DNA. The chain is DNA ligase from Chlorobium phaeobacteroides (strain BS1).